We begin with the raw amino-acid sequence, 362 residues long: Probable cinnamyl alcohol dehydrogenase 8D (362 aa).

Cys45 contributes to the Zn(2+) binding site. Thr47 contacts NADP(+). Residues His67, Glu68, Cys98, Cys101, Cys104, Cys112, and Cys161 each contribute to the Zn(2+) site. Residues Thr165, 186 to 191, 209 to 214, Thr249, Gly273, and 296 to 298 contribute to the NADP(+) site; these read GLGGLG, SSSPAK, and NGV.

Belongs to the zinc-containing alcohol dehydrogenase family. In terms of assembly, homodimer. The cofactor is Zn(2+).

The enzyme catalyses (E)-cinnamyl alcohol + NADP(+) = (E)-cinnamaldehyde + NADPH + H(+). The catalysed reaction is (E)-coniferol + NADP(+) = (E)-coniferaldehyde + NADPH + H(+). It carries out the reaction (E)-sinapyl alcohol + NADP(+) = (E)-sinapaldehyde + NADPH + H(+). It catalyses the reaction (E)-4-coumaroyl alcohol + NADP(+) = (E)-4-coumaraldehyde + NADPH + H(+). The enzyme catalyses (E)-caffeyl alcohol + NADP(+) = (E)-caffeyl aldehyde + NADPH + H(+). It participates in aromatic compound metabolism; phenylpropanoid biosynthesis. Functionally, involved in lignin biosynthesis. Catalyzes the final step specific for the production of lignin monomers. Catalyzes the NADPH-dependent reduction of coniferaldehyde, 5-hydroxyconiferaldehyde, sinapaldehyde, 4-coumaraldehyde and caffeyl aldehyde to their respective alcohols. This chain is Probable cinnamyl alcohol dehydrogenase 8D, found in Oryza sativa subsp. japonica (Rice).